The chain runs to 297 residues: Acetyl-coenzyme A carboxylase carboxyl transferase subunit beta (297 aa).

A CoA carboxyltransferase N-terminal domain is found at 25–294; the sequence is LWVKCPETGQ…VPPKGRLPAP (270 aa).

This sequence belongs to the AccD/PCCB family. As to quaternary structure, acetyl-CoA carboxylase is a heterohexamer composed of biotin carboxyl carrier protein (AccB), biotin carboxylase (AccC) and two subunits each of ACCase subunit alpha (AccA) and ACCase subunit beta (AccD).

The protein resides in the cytoplasm. The catalysed reaction is N(6)-carboxybiotinyl-L-lysyl-[protein] + acetyl-CoA = N(6)-biotinyl-L-lysyl-[protein] + malonyl-CoA. The protein operates within lipid metabolism; malonyl-CoA biosynthesis; malonyl-CoA from acetyl-CoA: step 1/1. Component of the acetyl coenzyme A carboxylase (ACC) complex. Biotin carboxylase (BC) catalyzes the carboxylation of biotin on its carrier protein (BCCP) and then the CO(2) group is transferred by the transcarboxylase to acetyl-CoA to form malonyl-CoA. The polypeptide is Acetyl-coenzyme A carboxylase carboxyl transferase subunit beta (Azorhizobium caulinodans (strain ATCC 43989 / DSM 5975 / JCM 20966 / LMG 6465 / NBRC 14845 / NCIMB 13405 / ORS 571)).